The following is a 241-amino-acid chain: L-aspartate dehydrogenase (241 aa).

NAD(+)-binding residues include A109 and N164. The active site involves H193.

The protein belongs to the L-aspartate dehydrogenase family.

It catalyses the reaction L-aspartate + NADP(+) + H2O = oxaloacetate + NH4(+) + NADPH + H(+). The catalysed reaction is L-aspartate + NAD(+) + H2O = oxaloacetate + NH4(+) + NADH + H(+). The protein operates within cofactor biosynthesis; NAD(+) biosynthesis; iminoaspartate from L-aspartate (dehydrogenase route): step 1/1. Functionally, specifically catalyzes the NAD or NADP-dependent dehydrogenation of L-aspartate to iminoaspartate. The sequence is that of L-aspartate dehydrogenase from Thermotoga sp. (strain RQ2).